Consider the following 217-residue polypeptide: GrpE protein homolog 1, mitochondrial (217 aa).

A mitochondrion-targeting transit peptide spans 1 to 27; the sequence is MAARCVRLARRSLPALALSFRPSPRLL. The tract at residues 37 to 56 is disordered; that stretch reads GQNLDEDLGHCEPKTDPPSA. At Lys94 the chain carries N6-acetyllysine; alternate. Lys94 is subject to N6-succinyllysine; alternate. Lys100 is subject to N6-acetyllysine. Lys120 is modified (N6-succinyllysine). Lys215 bears the N6-acetyllysine; alternate mark. Lys215 carries the post-translational modification N6-succinyllysine; alternate.

The protein belongs to the GrpE family. In terms of assembly, probable component of the PAM complex at least composed of a mitochondrial HSP70 protein, GRPEL1 or GRPEL2, TIMM44, TIMM16/PAM16 and TIMM14/DNAJC19. Binds to HSP70, HSC70 and HSJ1B.

It is found in the mitochondrion matrix. Essential component of the PAM complex, a complex required for the translocation of transit peptide-containing proteins from the inner membrane into the mitochondrial matrix in an ATP-dependent manner. Seems to control the nucleotide-dependent binding of mitochondrial HSP70 to substrate proteins. The sequence is that of GrpE protein homolog 1, mitochondrial (Grpel1) from Mus musculus (Mouse).